The chain runs to 467 residues: Argininosuccinate lyase (467 aa).

Belongs to the lyase 1 family. Argininosuccinate lyase subfamily.

The protein localises to the cytoplasm. It catalyses the reaction 2-(N(omega)-L-arginino)succinate = fumarate + L-arginine. It participates in amino-acid biosynthesis; L-arginine biosynthesis; L-arginine from L-ornithine and carbamoyl phosphate: step 3/3. In Rhizobium johnstonii (strain DSM 114642 / LMG 32736 / 3841) (Rhizobium leguminosarum bv. viciae), this protein is Argininosuccinate lyase.